We begin with the raw amino-acid sequence, 152 residues long: Protein NrdI (152 aa).

It belongs to the NrdI family.

Functionally, probably involved in ribonucleotide reductase function. The polypeptide is Protein NrdI (Mycobacterium sp. (strain JLS)).